A 547-amino-acid polypeptide reads, in one-letter code: Chaperonin GroEL 1 (547 aa).

Residues 29 to 32, 86 to 90, glycine 418, 482 to 484, and aspartate 498 contribute to the ATP site; these read TLGP, DGTTT, and NAA.

Belongs to the chaperonin (HSP60) family. Forms a cylinder of 14 subunits composed of two heptameric rings stacked back-to-back. Interacts with the co-chaperonin GroES.

The protein resides in the cytoplasm. It catalyses the reaction ATP + H2O + a folded polypeptide = ADP + phosphate + an unfolded polypeptide.. Functionally, together with its co-chaperonin GroES, plays an essential role in assisting protein folding. The GroEL-GroES system forms a nano-cage that allows encapsulation of the non-native substrate proteins and provides a physical environment optimized to promote and accelerate protein folding. The polypeptide is Chaperonin GroEL 1 (Corynebacterium jeikeium (strain K411)).